A 473-amino-acid polypeptide reads, in one-letter code: H(+)/Cl(-) exchange transporter ClcA (473 aa).

Residues 1–32 (MKTDTPSLEIPQAARLRRRQLIRQLLERDKTP) are Cytoplasmic-facing. The chain crosses the membrane as a helical span at residues 33–69 (LAILFMAAVVGTLVGLAAVAFDKGVSWLQNQRMGALV). The Periplasmic segment spans residues 70-76 (HTADNYP). A helical membrane pass occupies residues 77–100 (LLLTVAFLCSAVLAMFGYFLVRKY). Positions 106–110 (GSGIP) match the Selectivity filter part_1 motif. Residue serine 107 coordinates chloride. Positions 109-116 (IPEIEGAL) form an intramembrane region, helical. Topologically, residues 117 to 123 (EDQRPVR) are cytoplasmic. The next 2 membrane-spanning stretches (helical) occupy residues 124 to 141 (WWRV…TLGG) and 148 to 166 (EGPT…LDIF). The Selectivity filter part_2 motif lies at 146–150 (GREGP). Over 167 to 176 (RLKGDEARHT) the chain is Cytoplasmic. Intramembrane regions (helical) lie at residues 177 to 189 (LLAT…LAAA) and 193 to 201 (PLAGILFII). The Cytoplasmic portion of the chain corresponds to 202-214 (EEMRPQFRYTLIS). The chain crosses the membrane as a helical span at residues 215–232 (IKAVFIGVIMSTIMYRIF). The Periplasmic portion of the chain corresponds to 233 to 252 (NHEVALIDVGKLSDAPLNTL). A helical transmembrane segment spans residues 253 to 281 (WLYLILGIIFGIFGPIFNKWVLGMQDLLH). The Cytoplasmic portion of the chain corresponds to 282-287 (RVHGGN). A helical transmembrane segment spans residues 288-309 (ITKWVIMGGAIGGLCGLLGFVA). Residues 310 to 329 (PATSGGGFNLIPIATAGNFS) lie on the Periplasmic side of the membrane. The next 2 membrane-spanning stretches (helical) occupy residues 330–349 (MGML…LCFS) and 355–376 (GIFA…MVAV). The short motif at 355-359 (GIFAP) is the Selectivity filter part_3 element. Positions 356 and 357 each coordinate chloride. At 377 to 386 (ELFPQYHLEA) the chain is on the periplasmic side. The segment at residues 387-401 (GTFAIAGMGALLAAS) is an intramembrane region (helical). Residues 402–404 (IRA) constitute an intramembrane region (note=Loop between two helices). Positions 405-416 (PLTGIILVLEMT) form an intramembrane region, helical. An intramembrane region (note=Loop between two helices) is located at residues 417-421 (DNYQL). Residues 422–438 (ILPMIITGLGATLLAQF) form a helical membrane-spanning segment. Over 439–473 (TGGKPLYSAILARTLAKQEAEQLARSKAASASENT) the chain is Cytoplasmic. Chloride is bound at residue tyrosine 445.

It belongs to the chloride channel (TC 2.A.49) family. ClcA subfamily. In terms of assembly, homodimer.

It is found in the cell inner membrane. The enzyme catalyses 2 chloride(in) + H(+)(out) = 2 chloride(out) + H(+)(in). Proton-coupled chloride transporter. Functions as antiport system and exchanges two chloride ions for 1 proton. Probably acts as an electrical shunt for an outwardly-directed proton pump that is linked to amino acid decarboxylation, as part of the extreme acid resistance (XAR) response. This is H(+)/Cl(-) exchange transporter ClcA from Escherichia fergusonii (strain ATCC 35469 / DSM 13698 / CCUG 18766 / IAM 14443 / JCM 21226 / LMG 7866 / NBRC 102419 / NCTC 12128 / CDC 0568-73).